We begin with the raw amino-acid sequence, 32 residues long: Dermatoxin-J2 (32 aa).

Glutamine 32 is modified (glutamine amide).

In terms of tissue distribution, expressed by the skin glands.

The protein resides in the secreted. Antimicrobial peptide. This Phasmahyla jandaia (Jandaia leaf frog) protein is Dermatoxin-J2.